The following is a 693-amino-acid chain: Homeobox protein caupolican (693 aa).

Disordered regions lie at residues 20–104 (TANT…PSRG), 288–331 (NKMT…PGNQ), 387–453 (AQSH…DCGI), 480–538 (YLGQ…PLSM), 561–627 (MHLP…SMHS), and 648–693 (YGHG…RSGS). Residues 41–59 (ASLSPSGGSTATGLTAGPL) show a composition bias toward low complexity. The segment at residues 226-288 (LAARRKNATR…NARRRLKKEN (63 aa)) is a DNA-binding region (homeobox; TALE-type). Basic and acidic residues-rich tracts occupy residues 288 to 298 (NKMTWEPKNKT) and 308 to 317 (DDEKEKDAGD). Composition is skewed to low complexity over residues 397–419 (HPQQ…QLQH) and 493–515 (QQLP…QQQQ). Basic residues predominate over residues 516–527 (QHHHHPHHHHPH). Residues 609-627 (SSGGSSSSSGSSHSSSMHS) are compositionally biased toward low complexity. Positions 651-675 (GHSHGHGHGHGHGLGHGHGLGHGHG) are enriched in basic residues.

This sequence belongs to the TALE/IRO homeobox family.

Its subcellular location is the nucleus. Functionally, controls proneural and vein forming genes. Positive transcriptional controller of ac-sc (achaete-scute). May act as an activator that interacts with the transcriptional complex assembled on the ac and sc promoters and participates in transcription initiation. The polypeptide is Homeobox protein caupolican (caup) (Drosophila melanogaster (Fruit fly)).